The sequence spans 177 residues: MSRVAKAPVVIPAGVEVKLNGQVISIKGKNGELTRTVHSAVEVKQEENTLTFAPREGAVDGWAQAGTTRALLNAMVIGVTEGFTKKLQLVGVGYRAAVKGNVVNLALGFSHPVDHELPAGITAECPTQTEIVLKGADKQVIGQVAADLRAYRRPEPYKGKGVRYADEVVRTKEAKKK.

It belongs to the universal ribosomal protein uL6 family. In terms of assembly, part of the 50S ribosomal subunit.

This protein binds to the 23S rRNA, and is important in its secondary structure. It is located near the subunit interface in the base of the L7/L12 stalk, and near the tRNA binding site of the peptidyltransferase center. This Yersinia enterocolitica serotype O:8 / biotype 1B (strain NCTC 13174 / 8081) protein is Large ribosomal subunit protein uL6.